Here is a 51-residue protein sequence, read N- to C-terminus: Large ribosomal subunit protein eL39 (51 aa).

Belongs to the eukaryotic ribosomal protein eL39 family. Interacts with YIH1.

The polypeptide is Large ribosomal subunit protein eL39 (RPL39) (Kluyveromyces marxianus (Yeast)).